The primary structure comprises 367 residues: Phosphoribosylaminoimidazole-succinocarboxamide synthase (367 aa).

The protein belongs to the SAICAR synthetase family.

It catalyses the reaction 5-amino-1-(5-phospho-D-ribosyl)imidazole-4-carboxylate + L-aspartate + ATP = (2S)-2-[5-amino-1-(5-phospho-beta-D-ribosyl)imidazole-4-carboxamido]succinate + ADP + phosphate + 2 H(+). Its pathway is purine metabolism; IMP biosynthesis via de novo pathway; 5-amino-1-(5-phospho-D-ribosyl)imidazole-4-carboxamide from 5-amino-1-(5-phospho-D-ribosyl)imidazole-4-carboxylate: step 1/2. This chain is Phosphoribosylaminoimidazole-succinocarboxamide synthase, found in Shewanella baltica (strain OS185).